The following is a 185-amino-acid chain: ATP-dependent protease subunit HslV (185 aa).

The active site involves T6. Residues G162, C165, and T168 each contribute to the Na(+) site.

This sequence belongs to the peptidase T1B family. HslV subfamily. A double ring-shaped homohexamer of HslV is capped on each side by a ring-shaped HslU homohexamer. The assembly of the HslU/HslV complex is dependent on binding of ATP.

Its subcellular location is the cytoplasm. The catalysed reaction is ATP-dependent cleavage of peptide bonds with broad specificity.. Its activity is regulated as follows. Allosterically activated by HslU binding. In terms of biological role, protease subunit of a proteasome-like degradation complex believed to be a general protein degrading machinery. This chain is ATP-dependent protease subunit HslV, found in Nitratidesulfovibrio vulgaris (strain DSM 19637 / Miyazaki F) (Desulfovibrio vulgaris).